A 324-amino-acid polypeptide reads, in one-letter code: Probable WRKY transcription factor 53 (324 aa).

The segment at 93-126 (NPGSVPESPASINGSPRSEEFADGGGSSESHHRQ) is disordered. Residues 152–220 (GLEGPQDDVF…YRGTHTCSQA (69 aa)) constitute a DNA-binding region (WRKY).

It belongs to the WRKY group III family. In terms of assembly, interacts with ESR/ESP and UPL5. Binds to WRKY30. Ubiquitinated by UPL5. Ubiquitination leads to its subsequent degradation, thus controlling the timing of leaf senescence.

Its subcellular location is the nucleus. In terms of biological role, transcription factor. Interacts specifically with the W box (5'-(T)TGAC[CT]-3'), a frequently occurring elicitor-responsive cis-acting element. May regulate the early events of leaf senescence. Negatively regulates the expression of ESR/ESP. Together with WRKY46 and WRKY70, promotes resistance to P.syringae, probably by enhancing salicylic acid (SA)- dependent genes. Contributes to the suppression of jasmonic acid (MeJA)-induced expression of PDF1.2. The polypeptide is Probable WRKY transcription factor 53 (Arabidopsis thaliana (Mouse-ear cress)).